A 211-amino-acid polypeptide reads, in one-letter code: Redox-sensing transcriptional repressor Rex (211 aa).

A DNA-binding region (H-T-H motif) is located at residues 17–56; sequence KYHRYLEELMKNEVDRISSKELGEKIGFTASQIRQDLNCF. Position 91-96 (91-96) interacts with NAD(+); that stretch reads GAGNIG.

It belongs to the transcriptional regulatory Rex family. In terms of assembly, homodimer.

The protein localises to the cytoplasm. Its function is as follows. Modulates transcription in response to changes in cellular NADH/NAD(+) redox state. This Clostridium beijerinckii (strain ATCC 51743 / NCIMB 8052) (Clostridium acetobutylicum) protein is Redox-sensing transcriptional repressor Rex.